The primary structure comprises 159 residues: Phosphopantetheine adenylyltransferase (159 aa).

Residue S8 participates in substrate binding. ATP-binding positions include 8-9 (SF) and H16. Residues K40, T72, and R86 each coordinate substrate. ATP is bound by residues 87 to 89 (GLR), E97, and 122 to 128 (HSFVSSS).

This sequence belongs to the bacterial CoaD family. As to quaternary structure, homohexamer. It depends on Mg(2+) as a cofactor.

The protein localises to the cytoplasm. It catalyses the reaction (R)-4'-phosphopantetheine + ATP + H(+) = 3'-dephospho-CoA + diphosphate. Its pathway is cofactor biosynthesis; coenzyme A biosynthesis; CoA from (R)-pantothenate: step 4/5. Functionally, reversibly transfers an adenylyl group from ATP to 4'-phosphopantetheine, yielding dephospho-CoA (dPCoA) and pyrophosphate. In Synechococcus sp. (strain JA-2-3B'a(2-13)) (Cyanobacteria bacterium Yellowstone B-Prime), this protein is Phosphopantetheine adenylyltransferase.